The sequence spans 738 residues: Catalase-peroxidase (738 aa).

The signal sequence occupies residues M1–A24. The tryptophyl-tyrosyl-methioninium (Trp-Tyr) (with M-252) cross-link spans W104–Y226. H105 serves as the catalytic Proton acceptor. The disordered stretch occupies residues E191–L213. The span at T203–L213 shows a compositional bias: basic and acidic residues. The tryptophyl-tyrosyl-methioninium (Tyr-Met) (with W-104) cross-link spans Y226–M252. A heme b-binding site is contributed by H267.

Belongs to the peroxidase family. Peroxidase/catalase subfamily. In terms of assembly, homodimer or homotetramer. Requires heme b as cofactor. In terms of processing, formation of the three residue Trp-Tyr-Met cross-link is important for the catalase, but not the peroxidase activity of the enzyme.

The enzyme catalyses H2O2 + AH2 = A + 2 H2O. It catalyses the reaction 2 H2O2 = O2 + 2 H2O. Functionally, bifunctional enzyme with both catalase and broad-spectrum peroxidase activity. The chain is Catalase-peroxidase from Saccharophagus degradans (strain 2-40 / ATCC 43961 / DSM 17024).